Here is a 770-residue protein sequence, read N- to C-terminus: Amyloid-beta precursor protein (770 aa).

The signal sequence occupies residues 1-17; it reads MLPGLALLLLAAWTARA. The Extracellular segment spans residues 18–701; the sequence is LEVPTDGNAG…AEDVGSNKGA (684 aa). The segment at 28–123 is GFLD subdomain; sequence LLAEPQIAMF…PYRCLVGEFV (96 aa). The region spanning 28 to 189 is the E1 domain; it reads LLAEPQIAMF…RGVEFVCCPL (162 aa). 6 disulfide bridges follow: Cys38–Cys62, Cys73–Cys117, Cys98–Cys105, Cys133–Cys187, Cys144–Cys174, and Cys158–Cys186. 96-110 contributes to the heparin binding site; that stretch reads NWCKRGRKQCKTHPH. Residues 131–189 form a cuBD subdomain region; it reads DKCKFLHQERMDVCETHLHWHTVAKETCSEKSTNLHDYGMLLPCGIDKFRGVEFVCCPL. Cu(2+) contacts are provided by His147, His151, and Tyr168. A zinc-binding region spans residues 181–188; sequence GVEFVCCP. Residues Glu183, Cys186, and Cys187 each contribute to the Zn(2+) site. The segment covering 194-207 has biased composition (acidic residues); sequence DNVDSADAEEDDSD. The tract at residues 194-284 is disordered; the sequence is DNVDSADAEE…TTTTTTESVE (91 aa). Ser198 bears the Phosphoserine; by CK2 mark. Ser206 carries the post-translational modification Phosphoserine; by CK1. Tyr217 and Tyr262 each carry sulfotyrosine. The span at 228-264 shows a compositional bias: acidic residues; sequence VAEEEEVAEVEEEEADDDEDDEDGDEVEEEAEEPYEE. Residues 268–281 are compositionally biased toward low complexity; that stretch reads RTTSIATTTTTTTE. Disulfide bonds link Cys291–Cys341, Cys300–Cys324, and Cys316–Cys337. The BPTI/Kunitz inhibitor domain occupies 291–341; sequence CSEQAETGPCRAMISRWYFDVTEGKCAPFFYGGCGGNRNNFDTEEYCMAVC. Residue Tyr336 is modified to Sulfotyrosine. The short motif at 344–365 is the OX-2 element; the sequence is VMSQSLRKTTREPLTRDPVKLP. The 192-residue stretch at 374-565 folds into the E2 domain; sequence AVDKYLETPG…EEIQDEVDEL (192 aa). The tract at residues 391–423 is heparin-binding; the sequence is FQKAKERLEAKHRERMSQVMREWEEAERQAKNL. Phosphoserine is present on Ser441. Residues 491–522 are heparin-binding; that stretch reads FNMLKKYVRAEQKDRQHTLKHFEHVRMVDPKK. A Phosphotyrosine modification is found at Tyr497. Positions 523–540 are collagen-binding; it reads AAQIRSQVMTHLRVIYER. Residues Asn542 and Asn571 are each glycosylated (N-linked (GlcNAc...) asparagine). The Cu(2+) site is built by His677, Tyr681, His684, and His685. The Zn(2+) site is built by His677, Tyr681, His684, and His685. The interval 695–722 is interaction with PSEN1; sequence VGSNKGAIIGLMVGGVVIATVIVITLVM. The chain crosses the membrane as a helical span at residues 702 to 722; sequence IIGLMVGGVVIATVIVITLVM. The Cytoplasmic segment spans residues 723–770; that stretch reads LKKKQYTSIHHGVVEVDAAVTPEERHLSKMQQNGYENPTYKFFEQMQN. A Basolateral sorting signal motif is present at residues 724–734; that stretch reads KKKQYTSIHHG. Thr729 bears the Phosphothreonine mark. Residue Ser730 is modified to Phosphoserine; by APP-kinase I. The segment at 732-751 is interaction with G(o)-alpha; the sequence is HHGVVEVDAAVTPEERHLSK. A Phosphothreonine; by CDK5 and MAPK10 modification is found at Thr743. Residues 756 to 770 form a required for the interaction with KIF5B and for anterograde transport in axons region; it reads GYENPTYKFFEQMQN. A Phosphotyrosine; by ABL1 modification is found at Tyr757. The YENPXY motif; contains endocytosis signal signature appears at 757–762; that stretch reads YENPTY. Lys763 is covalently cross-linked (Glycyl lysine isopeptide (Lys-Gly) (interchain with G-Cter in ubiquitin)).

The protein belongs to the APP family. Binds, via its C-terminus, to the PID domain of several cytoplasmic proteins, including APBB family members, the APBA family, MAPK8IP1, SHC1 and NUMB and DAB1. Binding to DAB1 inhibits its serine phosphorylation. Interacts (via NPXY motif) with DAB2 (via PID domain); the interaction is impaired by tyrosine phosphorylation of the NPXY motif. Also interacts with GPCR-like protein BPP, APPBP1, IB1, KNS2 (via its TPR domains), APPBP2 (via BaSS) and DDB1. In vitro, it binds MAPT via the MT-binding domains. Associates with microtubules in the presence of ATP and in a kinesin-dependent manner. Interacts, through a C-terminal domain, with GNAO1. Amyloid-beta protein 42 binds CHRNA7 in hippocampal neurons. Amyloid-beta associates with HADH2. Interacts with CPEB1, ANKS1B and AGER. Interacts with ITM2B. Interacts with ITM2C. Interacts with IDE. Can form homodimers; dimerization is enhanced in the presence of Cu(2+) ions. Can form homodimers; this is promoted by heparin binding. Amyloid-beta protein 40 interacts with S100A9. CTF-alpha product of APP interacts with GSAP. Isoform APP695 interacts with SORL1 (via N-terminal ectodomain); this interaction retains APP in the trans-Golgi network and reduces processing into soluble APP-alpha and amyloid-beta peptides. Isoform APP770 interacts with SORL1. The C99 fragment also interacts with SORL1. Interacts with PLD3. Interacts with VDAC1. Interacts with NSG1; could regulate APP processing. Amyloid-beta protein 42 interacts with FPR2. Interacts (via transmembrane region) with PSEN1; the interaction is direct. Interacts with LRRK2. Interacts (via cytoplasmic domain) with KIF5B. Interacts (via C-terminus) with APBB2/FE65L1 (via C-terminus). Interacts (via intracellular domain) with APBB3. Proteolytically processed under normal cellular conditions. Cleavage either by alpha-secretase, beta-secretase or theta-secretase leads to generation and extracellular release of soluble APP peptides, S-APP-alpha and S-APP-beta, and the retention of corresponding membrane-anchored C-terminal fragments, C80, C83 and C99. Subsequent processing of C80 and C83 by gamma-secretase yields P3 peptides. This is the major secretory pathway and is non-amyloidogenic. Alternatively, presenilin/nicastrin-mediated gamma-secretase processing of C99 releases the amyloid-beta proteins, amyloid-beta protein 40 and amyloid-beta protein 42, major components of amyloid plaques, and the cytotoxic C-terminal fragments, gamma-CTF(50), gamma-CTF(57) and gamma-CTF(59). PSEN1 cleavage is more efficient with C83 than with C99 as substrate (in vitro). Amyloid-beta protein 40 and Amyloid-beta protein 42 are cleaved by ACE. Many other minor amyloid-beta peptides, amyloid-beta 1-X peptides, are found in cerebral spinal fluid (CSF) including the amyloid-beta X-15 peptides, produced from the cleavage by alpha-secretase. Post-translationally, proteolytically cleaved by caspases during neuronal apoptosis. Cleavage at Asp-739 by either caspase-3, -8 or -9 results in the production of the neurotoxic C31 peptide and the increased production of amyloid-beta peptides. In terms of processing, N- and O-glycosylated. Phosphorylation in the C-terminal on tyrosine, threonine and serine residues is neuron-specific. Phosphorylation can affect APP processing, neuronal differentiation and interaction with other proteins. Phosphorylated on Thr-743 in neuronal cells by Cdc5 kinase and Mapk10, in dividing cells by Cdc2 kinase in a cell-cycle dependent manner with maximal levels at the G2/M phase and, in vitro, by GSK-3-beta. The Thr-743 phosphorylated form causes a conformational change which reduces binding of Fe65 family members. In dopaminergic (DA) neurons, phosphorylation on Thr-743 by LRKK2 promotes the production and the nuclear translocation of the APP intracellular domain (AICD) which induces DA neuron apoptosis. Phosphorylation on Tyr-757 is required for SHC binding. Phosphorylated in the extracellular domain by casein kinases on both soluble and membrane-bound APP. This phosphorylation is inhibited by heparin. Post-translationally, trophic-factor deprivation triggers the cleavage of surface APP by beta-secretase to release sAPP-beta which is further cleaved to release an N-terminal fragment of APP (N-APP). In terms of processing, amyloid-beta peptides are degraded by IDE. Sulfated on tyrosine residues.

The protein resides in the cell membrane. It is found in the membrane. Its subcellular location is the perikaryon. The protein localises to the cell projection. It localises to the growth cone. The protein resides in the clathrin-coated pit. It is found in the early endosome. Its subcellular location is the cytoplasmic vesicle. The protein localises to the endoplasmic reticulum. It localises to the golgi apparatus. The protein resides in the secreted. It is found in the cell surface. Its subcellular location is the nucleus. The protein localises to the cytoplasm. Its function is as follows. Functions as a cell surface receptor and performs physiological functions on the surface of neurons relevant to neurite growth, neuronal adhesion and axonogenesis. Interaction between APP molecules on neighboring cells promotes synaptogenesis. Involved in cell mobility and transcription regulation through protein-protein interactions. Can promote transcription activation through binding to APBB1-KAT5 and inhibit Notch signaling through interaction with Numb. Couples to apoptosis-inducing pathways such as those mediated by G(o) and JIP. Inhibits G(o)-alpha ATPase activity. Acts as a kinesin I membrane receptor, mediating the axonal transport of beta-secretase and presenilin 1. By acting as a kinesin I membrane receptor, plays a role in axonal anterograde transport of cargo towards synapses in axons. May be involved in copper homeostasis/oxidative stress through copper ion reduction. In vitro, copper-metallated APP induces neuronal death directly or is potentiated through Cu(2+)-mediated low-density lipoprotein oxidation. Can regulate neurite outgrowth through binding to components of the extracellular matrix such as heparin and collagen I and IV. Induces a AGER-dependent pathway that involves activation of p38 MAPK, resulting in internalization of amyloid-beta peptide and mitochondrial dysfunction in cultured cortical neurons. Provides Cu(2+) ions for GPC1 which are required for release of nitric oxide (NO) and subsequent degradation of the heparan sulfate chains on GPC1. Amyloid-beta peptides are lipophilic metal chelators with metal-reducing activity. Binds transient metals such as copper, zinc and iron. Functionally, the gamma-CTF peptides as well as the caspase-cleaved peptides, including C31, are potent enhancers of neuronal apoptosis. The chain is Amyloid-beta precursor protein from Macaca fascicularis (Crab-eating macaque).